Consider the following 299-residue polypeptide: Anti-sigma-D factor RsdA (299 aa).

A helical transmembrane segment spans residues 86–106; the sequence is LAAVGSVAAALLVLSGFGAVV. The disordered stretch occupies residues 187-299; it reads NTKVETRDPN…APETPVSPTH (113 aa). 2 stretches are compositionally biased toward low complexity: residues 201–212 and 250–271; these read PGSPSNPAAPGS and PNST…EPGS.

As to quaternary structure, interacts with ECF RNA polymerase sigma factor SigD; this should inhibit the interaction of SigD with the RNA polymerase catalytic core. The cytosolic fragment is degraded by a ClpP1-ClpP2-ClpX complex, as would be expected after S1P and S2P intramembrane proteolysis. This releases SigD so that it may bind to the RNA polymerase catalytic core.

The protein resides in the cell membrane. Its function is as follows. An anti-sigma factor for extracytoplasmic function (ECF) sigma factor SigD. ECF sigma factors are held in an inactive form by an anti-sigma factor until released by regulated intramembrane proteolysis (RIP). RIP occurs when an extracytoplasmic signal triggers a concerted proteolytic cascade to transmit information and elicit cellular responses. The membrane-spanning regulatory substrate protein is first cut extracytoplasmically (site-1 protease, S1P), then within the membrane itself (site-2 protease, S2P), while cytoplasmic proteases finish degrading the regulatory protein, liberating the sigma factor. Neither S1P nor S2P proteases have been so far identified for this anti-sigma factor. The polypeptide is Anti-sigma-D factor RsdA (rsda) (Mycobacterium bovis (strain ATCC BAA-935 / AF2122/97)).